The following is a 572-amino-acid chain: uncharacterized protein (572 aa).

The segment at 553-572 (PSPAPKPVTVRKKKGNSPIS) is disordered. The segment covering 561–572 (TVRKKKGNSPIS) has biased composition (basic residues).

This is an uncharacterized protein from Homo sapiens (Human).